Reading from the N-terminus, the 129-residue chain is Small ribosomal subunit protein uS11 (129 aa).

Belongs to the universal ribosomal protein uS11 family. As to quaternary structure, part of the 30S ribosomal subunit. Interacts with proteins S7 and S18. Binds to IF-3.

Functionally, located on the platform of the 30S subunit, it bridges several disparate RNA helices of the 16S rRNA. Forms part of the Shine-Dalgarno cleft in the 70S ribosome. This Sinorhizobium medicae (strain WSM419) (Ensifer medicae) protein is Small ribosomal subunit protein uS11.